The sequence spans 143 residues: Snake venom vascular endothelial growth factor toxin (143 aa).

Residues 1 to 24 (MAVYLLAVAILFCIQGWPSGTVQG) form the signal peptide. The residue at position 25 (Glu25) is a Pyrrolidone carboxylic acid (Glu). 3 disulfides stabilise this stretch: Cys38-Cys80, Cys69-Cys115, and Cys73-Cys117. Residues 117–143 (CRPRSPGDVNDGRNPKEGEPRARFPFV) form a disordered region.

This sequence belongs to the PDGF/VEGF growth factor family. Snake venom VEGF subfamily. In terms of assembly, homodimer; disulfide-linked. Interacts with VEGF receptor-1 (FLT1) with a high affinity, whereas it binds to VEGF receptor-2 (KDR) with a low affinity. Does not bind to VEGFR-3/FLT4 and neuropilin-1 (NRP1). As to expression, expressed by the venom gland.

The protein resides in the secreted. Functionally, snake venom VEGFs may contribute to venom dispersion and prey subjugation by inducing vascular permeability and hypotension. This protein activates the vascular endothelial growth factor receptor-1 (VEGFR-1/FLT1), and consequently promotes the proliferation and tissue factor production of endothelial cells, the neovascularization in the chicken chorioallantoic membrane, and increases vascular permeability. Also stimulates tissue-factor production and human monocyte chemotaxis. The polypeptide is Snake venom vascular endothelial growth factor toxin (Protobothrops mucrosquamatus (Taiwan habu)).